An 847-amino-acid polypeptide reads, in one-letter code: Lethal(3)malignant brain tumor-like protein 1 (847 aa).

2 stretches are compositionally biased toward basic and acidic residues: residues 65–82 (FPRE…EKGV) and 144–155 (AVKEGHAKKDGD). 3 disordered regions span residues 65–87 (FPRE…SEPI), 142–163 (AEAV…PTSR), and 237–296 (VKKR…SEEK). MBT repeat units lie at residues 300-400 (WSWA…LQPP), 408-507 (FSWT…LTPP), and 516-611 (FIWE…LQPP). The interaction with monomethylated and dimethylated peptides stretch occupies residues 473-480 (FDNWDDTY). The CCHHC-type zinc-finger motif lies at 639–682 (SKYSFHHRKCPTPGCDGSGHVTGRFTAHYCLSGCPLAEKNQGKL). Positions 648, 653, 666, and 672 each coordinate Zn(2+). The 65-residue stretch at 778 to 842 (WTIDEVFSFV…YNAILMFKNA (65 aa)) folds into the SAM domain.

As to quaternary structure, homodimer.

Its subcellular location is the nucleus. Functionally, polycomb group (PcG) protein that specifically recognizes and binds mono- and dimethyllysine residues on target proteins, thereby acting as a 'reader' of a network of post-translational modifications. PcG proteins maintain the transcriptionally repressive state of genes: acts as a chromatin compaction factor by recognizing and binding mono- and dimethylated histone H1b/H1-4 at 'Lys-26' (H1bK26me1 and H1bK26me2) and histone H4 at 'Lys-20' (H4K20me1 and H4K20me2), leading to condense chromatin and repress transcription. The sequence is that of Lethal(3)malignant brain tumor-like protein 1 (L3MBTL1) from Gallus gallus (Chicken).